We begin with the raw amino-acid sequence, 343 residues long: 4-hydroxy-2-oxovalerate aldolase (343 aa).

A Pyruvate carboxyltransferase domain is found at 5–256; it reads ILLCDPTLRD…ETGIDLYKIL (252 aa). 13–14 is a substrate binding site; the sequence is RD. Residue aspartate 14 coordinates Mn(2+). The active-site Proton acceptor is histidine 17. Substrate contacts are provided by serine 168 and histidine 195. Residues histidine 195 and histidine 197 each coordinate Mn(2+).

The protein belongs to the 4-hydroxy-2-oxovalerate aldolase family. Interacts with MhpF.

The enzyme catalyses (S)-4-hydroxy-2-oxopentanoate = acetaldehyde + pyruvate. Its pathway is aromatic compound metabolism; 3-phenylpropanoate degradation. Catalyzes the retro-aldol cleavage of 4-hydroxy-2-oxopentanoate to pyruvate and acetaldehyde. Is involved in the meta-cleavage pathway for the degradation of aromatic compounds. In Pectobacterium atrosepticum (strain SCRI 1043 / ATCC BAA-672) (Erwinia carotovora subsp. atroseptica), this protein is 4-hydroxy-2-oxovalerate aldolase.